The chain runs to 104 residues: Cell cycle protein GpsB (104 aa).

Residues 34–72 are a coiled coil; sequence LDVVIQDYEVFQKKIERLEQEIHQLRTEAKRAASERQTR. A compositionally biased stretch (basic and acidic residues) spans 60 to 71; the sequence is TEAKRAASERQT. Positions 60–82 are disordered; it reads TEAKRAASERQTRHQTSPSVGST. Positions 73–82 are enriched in polar residues; that stretch reads HQTSPSVGST.

Belongs to the GpsB family. Forms polymers through the coiled coil domains. Interacts with PBP1, MreC and EzrA.

It is found in the cytoplasm. In terms of biological role, divisome component that associates with the complex late in its assembly, after the Z-ring is formed, and is dependent on DivIC and PBP2B for its recruitment to the divisome. Together with EzrA, is a key component of the system that regulates PBP1 localization during cell cycle progression. Its main role could be the removal of PBP1 from the cell pole after pole maturation is completed. Also contributes to the recruitment of PBP1 to the division complex. Not essential for septum formation. In Halalkalibacterium halodurans (strain ATCC BAA-125 / DSM 18197 / FERM 7344 / JCM 9153 / C-125) (Bacillus halodurans), this protein is Cell cycle protein GpsB.